Consider the following 343-residue polypeptide: Isopentenyl-diphosphate delta-isomerase (343 aa).

6–7 (RK) lines the substrate pocket. FMN contacts are provided by residues S63, 64-66 (SMT), S94, and N122. 94–96 (SMR) lines the substrate pocket. Q157 contributes to the substrate binding site. E158 is a binding site for Mg(2+). FMN-binding positions include K189, T219, 269–271 (GLK), and 290–291 (AG).

Belongs to the IPP isomerase type 2 family. As to quaternary structure, homooctamer. Dimer of tetramers. It depends on FMN as a cofactor. Requires NADPH as cofactor. The cofactor is Mg(2+).

Its subcellular location is the cytoplasm. It carries out the reaction isopentenyl diphosphate = dimethylallyl diphosphate. In terms of biological role, involved in the biosynthesis of isoprenoids. Catalyzes the 1,3-allylic rearrangement of the homoallylic substrate isopentenyl (IPP) to its allylic isomer, dimethylallyl diphosphate (DMAPP). In Rickettsia bellii (strain OSU 85-389), this protein is Isopentenyl-diphosphate delta-isomerase.